We begin with the raw amino-acid sequence, 499 residues long: Glutelin type-B 1 (499 aa).

Residues 1–24 (MASSVFSRFSIYFCVLLLCHGSMA) form the signal peptide. 2 disulfide bridges follow: C45–C78 and C121–C309. 2 Cupin type-1 domains span residues 50-247 (LQAF…VAAK) and 315-464 (VNIE…EQAR). Residues 467 to 499 (KNNRGEEHGAFTPRFQQQYYPGLSNESESETSE) form a disordered region.

It belongs to the 11S seed storage protein (globulins) family. In terms of assembly, hexamer; each subunit is composed of an acidic and a basic chain derived from a single precursor and linked by a disulfide bond.

In terms of biological role, seed storage protein. This is Glutelin type-B 1 (GluB1-A) from Oryza sativa subsp. japonica (Rice).